A 356-amino-acid polypeptide reads, in one-letter code: Glycerol-1-phosphate dehydrogenase [NAD(P)+] (356 aa).

Residues 103-107 and 125-128 each bind NAD(+); these read GRSID and TAAS. Position 130 (aspartate 130) interacts with substrate. Serine 134 serves as a coordination point for NAD(+). A substrate-binding site is contributed by aspartate 177. 2 residues coordinate Zn(2+): aspartate 177 and histidine 257. Histidine 261 contacts substrate. Zn(2+) is bound at residue histidine 273.

The protein belongs to the glycerol-1-phosphate dehydrogenase family. Zn(2+) serves as cofactor.

It localises to the cytoplasm. It carries out the reaction sn-glycerol 1-phosphate + NAD(+) = dihydroxyacetone phosphate + NADH + H(+). It catalyses the reaction sn-glycerol 1-phosphate + NADP(+) = dihydroxyacetone phosphate + NADPH + H(+). It participates in membrane lipid metabolism; glycerophospholipid metabolism. Its function is as follows. Catalyzes the NAD(P)H-dependent reduction of dihydroxyacetonephosphate (DHAP or glycerone phosphate) to glycerol 1-phosphate (G1P). The G1P thus generated is used as the glycerophosphate backbone of phospholipids in the cellular membranes of Archaea. This is Glycerol-1-phosphate dehydrogenase [NAD(P)+] from Methanosarcina barkeri (strain Fusaro / DSM 804).